The primary structure comprises 436 residues: Na(+)/H(+) antiporter NhaA (436 aa).

The next 11 helical transmembrane spans lie at 14–34 (AGGIVLIAATILTLILSNSTW), 59–79 (LHHWINDGLMAVFFFVVGLEL), 95–115 (ALPVIAALGGMLAPALIYHQF), 125–145 (WGIPMATDIAFAIGILVLLAW), 152–172 (IIFLTALAIADDLGAVLVIAI), 176–196 (PALHIKALMIAALLLLALLLF), 214–234 (FWYFVILSGIHATVAGIFLAF), 300–320 (AIQPWVTFAVLPVFALANAGI), 336–356 (IGTCLGLVLGKFLGIGLSSWL), 374–394 (LLGAAWLGGIGFTMSLFIGQL), and 407–427 (LGILLASLIAASIGLLWLFQV).

This sequence belongs to the NhaA Na(+)/H(+) (TC 2.A.33) antiporter family.

The protein localises to the cell inner membrane. The catalysed reaction is Na(+)(in) + 2 H(+)(out) = Na(+)(out) + 2 H(+)(in). Its function is as follows. Na(+)/H(+) antiporter that extrudes sodium in exchange for external protons. In Acidithiobacillus ferrooxidans (strain ATCC 23270 / DSM 14882 / CIP 104768 / NCIMB 8455) (Ferrobacillus ferrooxidans (strain ATCC 23270)), this protein is Na(+)/H(+) antiporter NhaA.